The following is a 955-amino-acid chain: Protein translocase subunit SecA (955 aa).

Residues Gln-87, 105 to 109 (GEGKT), and Asp-494 contribute to the ATP site. A disordered region spans residues 861-955 (AAPAPAAPRP…KKAPRTKRKR (95 aa)). Residues 874-888 (QEAAQQAQGTAAPSA) are compositionally biased toward low complexity. The segment covering 943 to 955 (SKGKKAPRTKRKR) has biased composition (basic residues).

This sequence belongs to the SecA family. In terms of assembly, monomer and homodimer. Part of the essential Sec protein translocation apparatus which comprises SecA, SecYEG and auxiliary proteins SecDF. Other proteins may also be involved.

It localises to the cell membrane. The protein resides in the cytoplasm. The catalysed reaction is ATP + H2O + cellular proteinSide 1 = ADP + phosphate + cellular proteinSide 2.. Part of the Sec protein translocase complex. Interacts with the SecYEG preprotein conducting channel. Has a central role in coupling the hydrolysis of ATP to the transfer of proteins into and across the cell membrane, serving as an ATP-driven molecular motor driving the stepwise translocation of polypeptide chains across the membrane. The protein is Protein translocase subunit SecA of Rhodococcus opacus (strain B4).